Consider the following 215-residue polypeptide: Adenylate kinase (215 aa).

An ATP-binding site is contributed by 10-15 (GAGKGT). The NMP stretch occupies residues 30–59 (STGDIFRKNISENTPLGMEARSYMDKGLLV). AMP contacts are provided by residues Thr-31, Arg-36, 57-59 (LLV), 85-88 (GFPR), and Gln-92. An LID region spans residues 126–163 (GRRVCTSCGGSFHIKFNPPTIDGKCNLCGSDIVQRKDD). Residue Arg-127 participates in ATP binding. Zn(2+)-binding residues include Cys-130 and Cys-133. Position 136 to 137 (136 to 137 (SF)) interacts with ATP. Positions 150 and 153 each coordinate Zn(2+). AMP is bound by residues Arg-160 and Arg-171. Lys-199 serves as a coordination point for ATP.

This sequence belongs to the adenylate kinase family. As to quaternary structure, monomer.

The protein localises to the cytoplasm. The catalysed reaction is AMP + ATP = 2 ADP. It functions in the pathway purine metabolism; AMP biosynthesis via salvage pathway; AMP from ADP: step 1/1. Catalyzes the reversible transfer of the terminal phosphate group between ATP and AMP. Plays an important role in cellular energy homeostasis and in adenine nucleotide metabolism. This chain is Adenylate kinase, found in Clostridium botulinum (strain Eklund 17B / Type B).